Consider the following 571-residue polypeptide: Proline--tRNA ligase (571 aa).

It belongs to the class-II aminoacyl-tRNA synthetase family. ProS type 1 subfamily. Homodimer.

It localises to the cytoplasm. The catalysed reaction is tRNA(Pro) + L-proline + ATP = L-prolyl-tRNA(Pro) + AMP + diphosphate. Functionally, catalyzes the attachment of proline to tRNA(Pro) in a two-step reaction: proline is first activated by ATP to form Pro-AMP and then transferred to the acceptor end of tRNA(Pro). As ProRS can inadvertently accommodate and process non-cognate amino acids such as alanine and cysteine, to avoid such errors it has two additional distinct editing activities against alanine. One activity is designated as 'pretransfer' editing and involves the tRNA(Pro)-independent hydrolysis of activated Ala-AMP. The other activity is designated 'posttransfer' editing and involves deacylation of mischarged Ala-tRNA(Pro). The misacylated Cys-tRNA(Pro) is not edited by ProRS. This is Proline--tRNA ligase from Azotobacter vinelandii (strain DJ / ATCC BAA-1303).